The following is a 338-amino-acid chain: Nicotinate-nucleotide--dimethylbenzimidazole phosphoribosyltransferase (338 aa).

Glu-306 serves as the catalytic Proton acceptor.

Belongs to the CobT family.

The enzyme catalyses 5,6-dimethylbenzimidazole + nicotinate beta-D-ribonucleotide = alpha-ribazole 5'-phosphate + nicotinate + H(+). It participates in nucleoside biosynthesis; alpha-ribazole biosynthesis; alpha-ribazole from 5,6-dimethylbenzimidazole: step 1/2. In terms of biological role, catalyzes the synthesis of alpha-ribazole-5'-phosphate from nicotinate mononucleotide (NAMN) and 5,6-dimethylbenzimidazole (DMB). In Cereibacter sphaeroides (strain KD131 / KCTC 12085) (Rhodobacter sphaeroides), this protein is Nicotinate-nucleotide--dimethylbenzimidazole phosphoribosyltransferase.